Here is a 169-residue protein sequence, read N- to C-terminus: Deoxyuridine 5'-triphosphate nucleotidohydrolase (169 aa).

The segment covering methionine 1–glutamate 10 has biased composition (polar residues). A disordered region spans residues methionine 1–glutamate 25. Residues arginine 91 to glycine 93, glycine 105 to aspartate 108, glycine 116, arginine 159, and phenylalanine 164 to glycine 165 contribute to the substrate site.

This sequence belongs to the dUTPase family. Homodimer. It depends on Mg(2+) as a cofactor. In terms of tissue distribution, vegetative and floral merismatic cells and provascular and vascular merismatic derivatives.

It carries out the reaction dUTP + H2O = dUMP + diphosphate + H(+). It participates in pyrimidine metabolism; dUMP biosynthesis; dUMP from dCTP (dUTP route): step 2/2. Its function is as follows. This enzyme is involved in nucleotide metabolism: it produces dUMP, the immediate precursor of thymidine nucleotides and it decreases the intracellular concentration of dUTP so that uracil cannot be incorporated into DNA. It may have as well a metabolic role in merismatic cells. This is Deoxyuridine 5'-triphosphate nucleotidohydrolase from Solanum lycopersicum (Tomato).